A 161-amino-acid chain; its full sequence is Cyclic pyranopterin monophosphate synthase (161 aa).

Substrate-binding positions include Leu-75–His-77 and Met-113–Glu-114. Residue Asp-128 is part of the active site.

It belongs to the MoaC family. Homohexamer; trimer of dimers.

The catalysed reaction is (8S)-3',8-cyclo-7,8-dihydroguanosine 5'-triphosphate = cyclic pyranopterin phosphate + diphosphate. Its pathway is cofactor biosynthesis; molybdopterin biosynthesis. Functionally, catalyzes the conversion of (8S)-3',8-cyclo-7,8-dihydroguanosine 5'-triphosphate to cyclic pyranopterin monophosphate (cPMP). The chain is Cyclic pyranopterin monophosphate synthase from Citrobacter koseri (strain ATCC BAA-895 / CDC 4225-83 / SGSC4696).